Consider the following 173-residue polypeptide: NADH-ubiquinone oxidoreductase chain 6 (173 aa).

5 helical membrane passes run 1 to 21 (MTYF…AVAS), 27 to 47 (YGVV…MSLG), 48 to 68 (MSFV…VVFV), 87 to 107 (VVGY…VGGL), and 139 to 159 (CGVG…FVVL).

Belongs to the complex I subunit 6 family.

It is found in the mitochondrion membrane. It carries out the reaction a ubiquinone + NADH + 5 H(+)(in) = a ubiquinol + NAD(+) + 4 H(+)(out). Core subunit of the mitochondrial membrane respiratory chain NADH dehydrogenase (Complex I) that is believed to belong to the minimal assembly required for catalysis. Complex I functions in the transfer of electrons from NADH to the respiratory chain. The immediate electron acceptor for the enzyme is believed to be ubiquinone. This chain is NADH-ubiquinone oxidoreductase chain 6 (MT-ND6), found in Synthliboramphus antiquus (Ancient murrelet).